A 908-amino-acid polypeptide reads, in one-letter code: Protein translocase subunit SecA (908 aa).

ATP contacts are provided by residues Gln-90, Gly-108 to Thr-112, and Asp-503. The segment covering Ala-846–Pro-864 has biased composition (low complexity). Residues Ala-846–Gly-884 form a disordered region. 4 residues coordinate Zn(2+): Cys-892, Cys-894, Cys-903, and His-904.

The protein belongs to the SecA family. Monomer and homodimer. Part of the essential Sec protein translocation apparatus which comprises SecA, SecYEG and auxiliary proteins SecDF-YajC and YidC. Zn(2+) is required as a cofactor.

It localises to the cell inner membrane. The protein resides in the cytoplasm. It catalyses the reaction ATP + H2O + cellular proteinSide 1 = ADP + phosphate + cellular proteinSide 2.. Functionally, part of the Sec protein translocase complex. Interacts with the SecYEG preprotein conducting channel. Has a central role in coupling the hydrolysis of ATP to the transfer of proteins into and across the cell membrane, serving both as a receptor for the preprotein-SecB complex and as an ATP-driven molecular motor driving the stepwise translocation of polypeptide chains across the membrane. This Cereibacter sphaeroides (strain KD131 / KCTC 12085) (Rhodobacter sphaeroides) protein is Protein translocase subunit SecA.